Consider the following 205-residue polypeptide: Transcriptional regulator GfcR (205 aa).

Belongs to the purine/pyrimidine phosphoribosyltransferase family. GfcR subfamily.

The chain is Transcriptional regulator GfcR from Methanococcus maripaludis (strain C7 / ATCC BAA-1331).